A 341-amino-acid chain; its full sequence is MSAPSTSTVVRVPFTELQSLLQAIFQRHGCSEAVARVLAHNCASAQRDGAHSHGVFRMPGYVSTLASGWVDGQATPQVSDVAAGYVRVDAAGGFAQPALAAARELLVAKARSAGIAVLAIHNSHHFAALWPDVEPFAEEGLVALSVVNSMTCVVPHGARKPLFGTNPIAFAAPCAEHDPIVFDMATSAMAHGDVQIAARAGQQLPEGMGVDADGQPTTDPKAILEGGALLPFGGHKGSALSMMVELLAAALTGGHFSWEFDWSGHPGAKTPWTGQLIIVINPGKAEGERFAQRSRELVEHMQAVGLTRMPGERRYREREVAEEEGVAVTEQELQGLKELLG.

Ser52 (charge relay system) is an active-site residue. His53 acts as the Proton donor in catalysis. Arg57 lines the substrate pocket. 125–129 (HFAAL) is a binding site for NADP(+). Residue Thr165 participates in substrate binding. Position 183-185 (183-185 (DMA)) interacts with NADP(+). 191-192 (HG) serves as a coordination point for substrate. Asp193 functions as the Charge relay system in the catalytic mechanism. NADP(+) contacts are provided by residues 235-236 (HK) and 308-314 (RMPGERR).

This sequence belongs to the LDH2/MDH2 oxidoreductase family. In terms of assembly, homodimer.

The enzyme catalyses L-pipecolate + NADP(+) = Delta(1)-piperideine-2-carboxylate + NADPH + H(+). It carries out the reaction L-proline + NADP(+) = 1-pyrroline-2-carboxylate + NADPH + H(+). It catalyses the reaction N-methyl-L-alanine + NADP(+) + H2O = methylamine + pyruvate + NADPH + H(+). With respect to regulation, is inhibited by the substrate analog pyrrole-2-carboxylate, but not by N-formylphenylalanine. Catalyzes the reduction of both Delta(1)-pyrroline-2-carboxylate (Pyr2C) and Delta(1)-piperideine-2-carboxylate (Pip2C) to L-proline and L-pipecolate, respectively, using NADPH as the electron donor. Can use NADH instead of NADPH, although with much less efficiency. Plays an essential role in the catabolism of D-proline and D-lysine, which allows P.putida to grow on each of these amino-acids as a sole carbon source; D-lysine appears to be catabolized only through the pipecolate pathway. Can also catalyze the reverse oxidation reactions, albeit at a much lower rate. To a lesser extent, is able to catalyze in vitro the NADPH-dependent formation of N-alkyl-L-amino acids from the corresponding alpha-oxo acids and alkylamines, e.g. the formation of N-methylalanine from pyruvate and N-methylamine; cannot use ammonia as substrate for these reductive amination reactions. Shows neither malate dehydrogenase nor lactate dehydrogenase activity. This is Delta(1)-pyrroline-2-carboxylate/Delta(1)-piperideine-2-carboxylate reductase from Pseudomonas putida (Arthrobacter siderocapsulatus).